The sequence spans 253 residues: Major prion protein (253 aa).

The signal sequence occupies residues 1 to 22 (MANLGCWMLVLFVATWSDLGLC). The tract at residues 23–38 (KKRPKPGGWNTGGSRY) is interaction with ADGRG6. The segment at 23 to 230 (KKRPKPGGWN…ESQAYYQRGS (208 aa)) is interaction with GRB2, ERI3 and SYN1. Positions 26–108 (PKPGGWNTGG…WNKPSKPKTS (83 aa)) are disordered. 5 consecutive repeat copies span residues 51 to 59 (PQGGGGWGQ), 60 to 67 (PHGGGWGQ), 68 to 75 (PHGGGWGQ), 76 to 83 (PHGGGWGQ), and 84 to 91 (PHGGGWGQ). The interval 51–91 (PQGGGGWGQPHGGGWGQPHGGGWGQPHGGGWGQPHGGGWGQ) is 5 X 8 AA tandem repeats of P-H-G-G-G-W-G-Q. Gly residues predominate over residues 52–95 (QGGGGWGQPHGGGWGQPHGGGWGQPHGGGWGQPHGGGWGQGGGT). Residues histidine 61, glycine 62, glycine 63, histidine 69, glycine 70, glycine 71, histidine 77, glycine 78, glycine 79, histidine 85, glycine 86, and glycine 87 each contribute to the Cu(2+) site. A disulfide bridge links cysteine 179 with cysteine 214. N-linked (GlcNAc...) asparagine glycans are attached at residues asparagine 181 and asparagine 197. The GPI-anchor amidated serine moiety is linked to residue serine 230. Residues 231–253 (SMVLFSSPPVILLISFLIFLIVG) constitute a propeptide, removed in mature form.

This sequence belongs to the prion family. As to quaternary structure, monomer and homodimer. Has a tendency to aggregate into amyloid fibrils containing a cross-beta spine, formed by a steric zipper of superposed beta-strands. Soluble oligomers may represent an intermediate stage on the path to fibril formation. Copper binding may promote oligomerization. Interacts with GRB2, APP, ERI3/PRNPIP and SYN1. Mislocalized cytosolically exposed PrP interacts with MGRN1; this interaction alters MGRN1 subcellular location and causes lysosomal enlargement. Interacts with APP. Interacts with KIAA1191. Interacts with ADGRG6.

It is found in the cell membrane. The protein localises to the golgi apparatus. Its primary physiological function is unclear. May play a role in neuronal development and synaptic plasticity. May be required for neuronal myelin sheath maintenance. May promote myelin homeostasis through acting as an agonist for ADGRG6 receptor. May play a role in iron uptake and iron homeostasis. Soluble oligomers are toxic to cultured neuroblastoma cells and induce apoptosis (in vitro). Association with GPC1 (via its heparan sulfate chains) targets PRNP to lipid rafts. Also provides Cu(2+) or Zn(2+) for the ascorbate-mediated GPC1 deaminase degradation of its heparan sulfate side chains. This Colobus guereza (Mantled guereza) protein is Major prion protein (PRNP).